Reading from the N-terminus, the 272-residue chain is Tryptophan synthase alpha chain (272 aa).

Catalysis depends on proton acceptor residues E49 and D60.

The protein belongs to the TrpA family. Tetramer of two alpha and two beta chains.

The catalysed reaction is (1S,2R)-1-C-(indol-3-yl)glycerol 3-phosphate + L-serine = D-glyceraldehyde 3-phosphate + L-tryptophan + H2O. It participates in amino-acid biosynthesis; L-tryptophan biosynthesis; L-tryptophan from chorismate: step 5/5. In terms of biological role, the alpha subunit is responsible for the aldol cleavage of indoleglycerol phosphate to indole and glyceraldehyde 3-phosphate. The polypeptide is Tryptophan synthase alpha chain (Methylibium petroleiphilum (strain ATCC BAA-1232 / LMG 22953 / PM1)).